A 441-amino-acid chain; its full sequence is Chitinase-like protein Idgf3 (441 aa).

The first 23 residues, 1–23 (MTGSLWLSLALSLAVLAQFKVSA), serve as a signal peptide directing secretion. In terms of domain architecture, GH18 spans 25–441 (PNLVCFYDSQ…MLRAIKYRLL (417 aa)). Residues cysteine 29 and cysteine 56 are joined by a disulfide bond. Asparagine 221 is a glycosylation site (N-linked (GlcNAc...) asparagine). The interval 309 to 331 (SGDSGMPVVPSTQGPAPAGPQSK) is disordered. Cysteines 342 and 425 form a disulfide.

The protein belongs to the glycosyl hydrolase 18 family. IDGF subfamily. Glycosylated.

It localises to the secreted. Cooperates with insulin-like peptides to stimulate the proliferation, polarization and motility of imaginal disk cells. May act by stabilizing the binding of insulin-like peptides to its receptor through a simultaneous interaction with both molecules to form a multiprotein signaling complex. This chain is Chitinase-like protein Idgf3 (Idgf3), found in Drosophila yakuba (Fruit fly).